Here is a 310-residue protein sequence, read N- to C-terminus: Iron ABC transporter substrate-binding lipoprotein MtsA (310 aa).

The signal sequence occupies residues 1–20 (MGKRMSLILGAFLSVFLLVA). Cysteine 21 carries the N-palmitoyl cysteine lipid modification. Residue cysteine 21 is the site of S-diacylglycerol cysteine attachment. Positions 68, 140, 206, and 281 each coordinate Fe(2+).

Belongs to the bacterial solute-binding protein 9 family. Lipoprotein receptor antigen (Lrai) subfamily.

The protein resides in the cell membrane. In terms of biological role, part of the ATP-binding cassette (ABC) transport system MtsABC involved in iron import. Binds iron with high affinity and specificity and delivers it to the membrane permease for translocation into the cytoplasm. Has low affinity for Zn(2+) and Cu(2+). This chain is Iron ABC transporter substrate-binding lipoprotein MtsA (mtsA), found in Streptococcus pyogenes serotype M1.